Reading from the N-terminus, the 370-residue chain is S-adenosylmethionine decarboxylase proenzyme (370 aa).

Position 28 (Phe28) interacts with substrate. Catalysis depends on residues Glu29 and Glu32. Substrate is bound at residue Glu85. Catalysis depends on Ser86, which acts as the Schiff-base intermediate with substrate; via pyruvic acid. The residue at position 86 (Ser86) is a Pyruvic acid (Ser); by autocatalysis. Cys100 (proton donor; for catalytic activity) is an active-site residue. Catalysis depends on proton acceptor; for processing activity residues Ser250 and His263. Glu267 provides a ligand contact to substrate.

It belongs to the eukaryotic AdoMetDC family. As to quaternary structure, forms a heterodimer with catalytically inactive AdoMetDC prozyme; heterodimerization is required to activate AdoMetDC. Requires pyruvate as cofactor. Is synthesized initially as an inactive proenzyme. Formation of the active enzyme involves a self-maturation process in which the active site pyruvoyl group is generated from an internal serine residue via an autocatalytic post-translational modification. Two non-identical subunits are generated from the proenzyme in this reaction, and the pyruvate is formed at the N-terminus of the alpha chain, which is derived from the carboxyl end of the proenzyme. The post-translation cleavage follows an unusual pathway, termed non-hydrolytic serinolysis, in which the side chain hydroxyl group of the serine supplies its oxygen atom to form the C-terminus of the beta chain, while the remainder of the serine residue undergoes an oxidative deamination to the alpha chain.

The catalysed reaction is S-adenosyl-L-methionine + H(+) = S-adenosyl 3-(methylsulfanyl)propylamine + CO2. The protein operates within amine and polyamine biosynthesis; S-adenosylmethioninamine biosynthesis; S-adenosylmethioninamine from S-adenosyl-L-methionine: step 1/1. Its activity is regulated as follows. Allosterically activated by AdoMetDC prozyme. Activated by putrescine. Inhibited by spermine and methylglyoxal-bis(guanylhydrazone) (MGBG) and slightly by spermidine. Inhibited by 5'-([(Z)-4-amino-2-butenyl]methylamino)-5'-deoxyadenosine (MDL 73811). In terms of biological role, probably in association with catalytically inactive AdoMetDC prozyme, catalyzes the decarboxylation of S-adenosyl-L-methionine which is essential for the biosynthesis of the polyamine spermidine. Required for growth and survival during the bloodstream life cycle stage. The chain is S-adenosylmethionine decarboxylase proenzyme from Trypanosoma cruzi.